The chain runs to 396 residues: Cell division protein FtsZ 1 (396 aa).

Residues 1 to 38 (MDSIVQDAIDEAEESEDSASEPADVAGGGGDTVPTGTM) form a disordered region. Residues 8–19 (AIDEAEESEDSA) are compositionally biased toward acidic residues. GTP is bound by residues 61-65 (GAGSN), 148-150 (GTG), Glu179, Arg183, and Asp226. A disordered region spans residues 358–396 (QIYGRNEAAEGDGPAQESTPEPEPEPQAGSEIEDIDYVE).

This sequence belongs to the FtsZ family. In terms of assembly, homodimer. Polymerizes to form a dynamic ring structure in a strictly GTP-dependent manner. Interacts directly with several other division proteins.

It is found in the cytoplasm. Its function is as follows. Essential cell division protein that forms a contractile ring structure (Z ring) at the future cell division site. The regulation of the ring assembly controls the timing and the location of cell division. One of the functions of the FtsZ ring is to recruit other cell division proteins to the septum to produce a new cell wall between the dividing cells. Binds GTP and shows GTPase activity. The chain is Cell division protein FtsZ 1 from Halobacterium salinarum (strain ATCC 29341 / DSM 671 / R1).